We begin with the raw amino-acid sequence, 268 residues long: MNTKEISKVVDLVRESNPLVHNITNVVVTNFTANGLLALGASPVMAYAKEEVAEMTSIAGALVLNMGTLRPDEVEAMLLAGKSANMNDVPVLFDPVGAGATSYRTEVARHIPAEIELAIIRGNAAEIANVINEKWEIKGVDAGAGNGNVVSIAKQAADELNTVAVITGKEDVVTDGERTIVIRNGHSILTKVTGTGCLLTSVIGAFVAVEKDYAKAAVAALTFYGVAAELAAAKTVEKGPGSFQIEFLNQLANTTSSDIEKYGKIEVI.

M45 is a substrate binding site. 2 residues coordinate ATP: R121 and T167. G194 contributes to the substrate binding site.

Belongs to the Thz kinase family. Requires Mg(2+) as cofactor.

The enzyme catalyses 5-(2-hydroxyethyl)-4-methylthiazole + ATP = 4-methyl-5-(2-phosphooxyethyl)-thiazole + ADP + H(+). Its pathway is cofactor biosynthesis; thiamine diphosphate biosynthesis; 4-methyl-5-(2-phosphoethyl)-thiazole from 5-(2-hydroxyethyl)-4-methylthiazole: step 1/1. Catalyzes the phosphorylation of the hydroxyl group of 4-methyl-5-beta-hydroxyethylthiazole (THZ). The sequence is that of Hydroxyethylthiazole kinase from Bacillus cereus (strain ZK / E33L).